The primary structure comprises 257 residues: Transmembrane protein C257L (257 aa).

2 consecutive transmembrane segments (helical) span residues 123–143 (LELL…FTAL) and 163–183 (MMIF…YVLV).

This sequence belongs to the asfivirus C257R family.

Its subcellular location is the host membrane. It localises to the virion. The polypeptide is Transmembrane protein C257L (African swine fever virus (isolate Warthog/Namibia/Wart80/1980) (ASFV)).